The following is a 582-amino-acid chain: Aspartate--tRNA(Asp/Asn) ligase (582 aa).

Glutamate 177 contributes to the L-aspartate binding site. Positions 201-204 (QLFK) are aspartate. Residue arginine 223 coordinates L-aspartate. Residues 223–225 (RDE) and glutamine 232 each bind ATP. An L-aspartate-binding site is contributed by histidine 447. Glutamate 481 serves as a coordination point for ATP. L-aspartate is bound at residue arginine 488. 533–536 (GLDR) contacts ATP.

The protein belongs to the class-II aminoacyl-tRNA synthetase family. Type 1 subfamily. In terms of assembly, homodimer.

It localises to the cytoplasm. The enzyme catalyses tRNA(Asx) + L-aspartate + ATP = L-aspartyl-tRNA(Asx) + AMP + diphosphate. Aspartyl-tRNA synthetase with relaxed tRNA specificity since it is able to aspartylate not only its cognate tRNA(Asp) but also tRNA(Asn). Reaction proceeds in two steps: L-aspartate is first activated by ATP to form Asp-AMP and then transferred to the acceptor end of tRNA(Asp/Asn). This Chlamydia trachomatis serovar A (strain ATCC VR-571B / DSM 19440 / HAR-13) protein is Aspartate--tRNA(Asp/Asn) ligase.